Reading from the N-terminus, the 506-residue chain is Cytochrome P450 monooxygenase atr2 (506 aa).

A helical membrane pass occupies residues 18–38 (VFAGLVLASLLTTTYCIWNIF). Residue Cys-451 participates in heme binding.

The protein belongs to the cytochrome P450 family. Heme serves as cofactor.

It is found in the membrane. It carries out the reaction 4-O-demethylbarbatate + reduced [NADPH--hemoprotein reductase] + O2 = proatranorin II + oxidized [NADPH--hemoprotein reductase] + H2O + H(+). It catalyses the reaction proatranorin II + reduced [NADPH--hemoprotein reductase] + O2 = proatranorin III + oxidized [NADPH--hemoprotein reductase] + 2 H2O + H(+). The enzyme catalyses proatranorin I + reduced [NADPH--hemoprotein reductase] + O2 = proatranorin IV + oxidized [NADPH--hemoprotein reductase] + H2O + H(+). The catalysed reaction is proatranorin IV + reduced [NADPH--hemoprotein reductase] + O2 = atranorin + oxidized [NADPH--hemoprotein reductase] + 2 H2O + H(+). Its pathway is secondary metabolite biosynthesis; terpenoid biosynthesis. Functionally, cytochrome P450 monooxygenase; part of the gene cluster that mediates the biosynthesis of atranorin, a depside of polyketide origin that accumulates in the cortical or medullary layers of lichen thalli. Atr2 performs the oxidation at the C-9 position of 4-O-demethylbarbatic acid to yield proatranorin III via proatranorin II. Atr2 is also able to oxidize the atr3 product proatranorin I to produce the final compound atranorin. The first step in the pathway is performed by the non-reducing polyketide synthase atr1 that produces 4-O-demethylbarbatic acid composed of two 3-methylorsellinic acid (3MOA) moieties. The pathway continues with the actions of the cytochrome P450 monooygenase atr2 that catalizes the oxidation of c-9 and the O-methyltransferase atr3 that performs the methylation of the carboxyl group to yield atranorin, via the proatranorin II and III intermediates if atr2 acts first, or the proatranorin I intermediate if atr3 acts first. The sequence is that of Cytochrome P450 monooxygenase atr2 from Stereocaulon alpinum (Alpine snow lichen).